Here is a 339-residue protein sequence, read N- to C-terminus: 1-aminocyclopropane-1-carboxylate deaminase (339 aa).

N6-(pyridoxal phosphate)lysine is present on Lys-52. Ser-79 acts as the Nucleophile in catalysis.

It belongs to the ACC deaminase/D-cysteine desulfhydrase family. In terms of assembly, homotrimer. Requires pyridoxal 5'-phosphate as cofactor.

It catalyses the reaction 1-aminocyclopropane-1-carboxylate + H2O = 2-oxobutanoate + NH4(+). In terms of biological role, catalyzes a cyclopropane ring-opening reaction, the irreversible conversion of 1-aminocyclopropane-1-carboxylate (ACC) to ammonia and alpha-ketobutyrate. Allows growth on ACC as a nitrogen source. This chain is 1-aminocyclopropane-1-carboxylate deaminase, found in Bradyrhizobium sp. (strain BTAi1 / ATCC BAA-1182).